Here is a 661-residue protein sequence, read N- to C-terminus: UvrABC system protein B (661 aa).

One can recognise a Helicase ATP-binding domain in the interval 26–181; the sequence is KGIQEGRKHQ…LLRKLVDIQY (156 aa). 39–46 contacts ATP; it reads GATGTGKT. Residues 92–115 carry the Beta-hairpin motif; that stretch reads YYDYYQPEAYVPQTDTFIEKDASI. In terms of domain architecture, Helicase C-terminal spans 430–596; that stretch reads QIDDLIGEIQ…TINKEIRDVI (167 aa). A UVR domain is found at 625–660; that stretch reads QKVVEQMEHEMKEAARALDFERAAELRDLLLELKAE.

This sequence belongs to the UvrB family. As to quaternary structure, forms a heterotetramer with UvrA during the search for lesions. Interacts with UvrC in an incision complex.

The protein resides in the cytoplasm. Functionally, the UvrABC repair system catalyzes the recognition and processing of DNA lesions. A damage recognition complex composed of 2 UvrA and 2 UvrB subunits scans DNA for abnormalities. Upon binding of the UvrA(2)B(2) complex to a putative damaged site, the DNA wraps around one UvrB monomer. DNA wrap is dependent on ATP binding by UvrB and probably causes local melting of the DNA helix, facilitating insertion of UvrB beta-hairpin between the DNA strands. Then UvrB probes one DNA strand for the presence of a lesion. If a lesion is found the UvrA subunits dissociate and the UvrB-DNA preincision complex is formed. This complex is subsequently bound by UvrC and the second UvrB is released. If no lesion is found, the DNA wraps around the other UvrB subunit that will check the other stand for damage. This is UvrABC system protein B from Bacillus velezensis (strain DSM 23117 / BGSC 10A6 / LMG 26770 / FZB42) (Bacillus amyloliquefaciens subsp. plantarum).